A 429-amino-acid polypeptide reads, in one-letter code: Enolase (429 aa).

Residue Gln-162 participates in (2R)-2-phosphoglycerate binding. Glu-204 acts as the Proton donor in catalysis. Positions 241, 283, and 310 each coordinate Mg(2+). Residues Lys-335, Arg-364, Ser-365, and Lys-386 each coordinate (2R)-2-phosphoglycerate. The active-site Proton acceptor is Lys-335.

The protein belongs to the enolase family. It depends on Mg(2+) as a cofactor.

The protein resides in the cytoplasm. It localises to the secreted. It is found in the cell surface. It carries out the reaction (2R)-2-phosphoglycerate = phosphoenolpyruvate + H2O. Its pathway is carbohydrate degradation; glycolysis; pyruvate from D-glyceraldehyde 3-phosphate: step 4/5. In terms of biological role, catalyzes the reversible conversion of 2-phosphoglycerate (2-PG) into phosphoenolpyruvate (PEP). It is essential for the degradation of carbohydrates via glycolysis. The protein is Enolase of Mycobacterium avium (strain 104).